We begin with the raw amino-acid sequence, 128 residues long: Large ribosomal subunit protein bL12 (128 aa).

It belongs to the bacterial ribosomal protein bL12 family. As to quaternary structure, homodimer. Part of the ribosomal stalk of the 50S ribosomal subunit. Forms a multimeric L10(L12)X complex, where L10 forms an elongated spine to which 2 to 4 L12 dimers bind in a sequential fashion. Binds GTP-bound translation factors.

In terms of biological role, forms part of the ribosomal stalk which helps the ribosome interact with GTP-bound translation factors. Is thus essential for accurate translation. The sequence is that of Large ribosomal subunit protein bL12 from Corynebacterium kroppenstedtii (strain DSM 44385 / JCM 11950 / CIP 105744 / CCUG 35717).